A 2629-amino-acid polypeptide reads, in one-letter code: Telomerase protein component 1 (2629 aa).

TEP1 N-terminal repeat units lie at residues 1–30, 31–60, 61–90, and 91–120; these read MEKLCGHVPGHSDILSLKNRCLTMLPDLQP, LEKIHGHRSVHSDILSLENQCLTMLSDLQP, TERIDGHISVHPDILSLENRCLTMLPDLQP, and LEKLCGHMSSHPDVLSLENQCLATLPTVKS. The TROVE domain occupies 227 to 685; it reads LKLTSGDSGF…VKHNLSPMPG (459 aa). The segment covering 386–397 has biased composition (basic residues); it reads PRKHRSKRRSRQ. A disordered region spans residues 386–412; it reads PRKHRSKRRSRQPPRPQKTERPFSERG. Residues 402–412 show a composition bias toward basic and acidic residues; that stretch reads QKTERPFSERG. The NACHT domain maps to 1171–1578; sequence RLSLVTGQAG…EFLTNLHVVA (408 aa). 1177–1184 contacts ATP; the sequence is GQAGQGKT. WD repeat units lie at residues 1420–1462, 1681–1720, 1723–1761, 1764–1803, 1805–1844, 1847–1886, 1889–1930, 1932–1971, 1974–2013, 2015–2054, 2067–2106, 2113–2151, 2154–2191, 2193–2241, 2244–2282, 2285–2324, 2326–2362, 2375–2424, 2467–2507, 2555–2592, and 2594–2628; these read VLPQ…EVLA, TMSSSPTAVAFSPNGQRAAVGTASGTIYLLNLKTWQEEKA, SGCDGISSFAFLSDTALFLTTFDGHLELWDLQHGCWVFQ, AHQYQITGCCLSPDRRLLATVCLGGYLKLWDTVRGQLAFQ, THPKSLNCVAFHPEGQVVATGSWAGSITFFQADGLKVTKE, APGPSVCSLAFNKPGKIVAVGRIDGTVELWAWQEGARLAA, AQCG…GCLG, LPLSPALSVALNPDGDQVAVGYREDGINIYKISSGSQGPQ, ELNVAVSALVWLSPSVLVSGAEDGSLHGWMFKGDSLHSLW, LSRYQKPVLGLAASRELMAAASEDFTVRLWPRQLLTQPHV, GHEGPVCCCSFSPDGGILATAGRDRNLLCWDMKIAQAPLL, CHRDWITGCAWTKDNILVSCSSDGSVGLWNPEAGQQLGQ, GHQSAVSAVVAVEEHIVSVSRDGTLKVWDHQGVELTSI, AHSG…QIRT, GHSGPVTAAAASEASGLLLTSDDSSVQLWQIPKEADDSY, RSSVAITAVAWAPDGSMVVSGNEAGELTLWQQAKAVATAQ, PGRVSHLIWYSANSFFVLSANENVSEWQVGLRKGSTS, EDWG…SSIL, PNGS…GEWI, IHLGSVTALHVLPGLLVTASKDRDVKLWERPSMQLLGL, and RCEGPVSCLEPWMEPSSPLQLAVGDTQGNLYFLSW.

Associated component of the telomerase holoenzyme complex. Component of the vault ribonucleoprotein particle, at least composed of MVP, PARP4 and one or more vault RNAs (vRNAs). Binds to VAULTRC1, VAULTRC2 and VAULTRC4/hvg4 vRNAs. As to expression, ubiquitous.

It localises to the nucleus. It is found in the chromosome. Its subcellular location is the telomere. Its function is as follows. Component of the telomerase ribonucleoprotein complex that is essential for the replication of chromosome termini. Also a component of the ribonucleoprotein vaults particle, a multi-subunit structure involved in nucleo-cytoplasmic transport. Responsible for the localizing and stabilizing vault RNA (vRNA) association in the vault ribonucleoprotein particle. This is Telomerase protein component 1 (Tep1) from Mus musculus (Mouse).